The sequence spans 159 residues: Phosphopantetheine adenylyltransferase (159 aa).

Thr9 contacts substrate. Residues 9–10 (TF) and His17 contribute to the ATP site. Substrate contacts are provided by Lys41, Leu73, and Arg87. Residues 88 to 90 (GLR), Glu98, and 123 to 129 (YSFISST) contribute to the ATP site.

The protein belongs to the bacterial CoaD family. As to quaternary structure, homohexamer. Mg(2+) is required as a cofactor.

It is found in the cytoplasm. It carries out the reaction (R)-4'-phosphopantetheine + ATP + H(+) = 3'-dephospho-CoA + diphosphate. The protein operates within cofactor biosynthesis; coenzyme A biosynthesis; CoA from (R)-pantothenate: step 4/5. Reversibly transfers an adenylyl group from ATP to 4'-phosphopantetheine, yielding dephospho-CoA (dPCoA) and pyrophosphate. This chain is Phosphopantetheine adenylyltransferase, found in Pseudomonas aeruginosa (strain LESB58).